Here is a 254-residue protein sequence, read N- to C-terminus: Triosephosphate isomerase (254 aa).

Substrate is bound at residue 9–11 (NWK). Histidine 98 (electrophile) is an active-site residue. Glutamate 170 acts as the Proton acceptor in catalysis. Substrate-binding positions include glycine 176, serine 215, and 236 to 237 (GG).

Belongs to the triosephosphate isomerase family. In terms of assembly, homodimer.

It localises to the cytoplasm. It carries out the reaction D-glyceraldehyde 3-phosphate = dihydroxyacetone phosphate. It functions in the pathway carbohydrate biosynthesis; gluconeogenesis. Its pathway is carbohydrate degradation; glycolysis; D-glyceraldehyde 3-phosphate from glycerone phosphate: step 1/1. In terms of biological role, involved in the gluconeogenesis. Catalyzes stereospecifically the conversion of dihydroxyacetone phosphate (DHAP) to D-glyceraldehyde-3-phosphate (G3P). The sequence is that of Triosephosphate isomerase from Buchnera aphidicola subsp. Cinara cedri (strain Cc).